Reading from the N-terminus, the 250-residue chain is 5-oxoprolinase subunit A (250 aa).

Belongs to the LamB/PxpA family. Forms a complex composed of PxpA, PxpB and PxpC.

It catalyses the reaction 5-oxo-L-proline + ATP + 2 H2O = L-glutamate + ADP + phosphate + H(+). In terms of biological role, catalyzes the cleavage of 5-oxoproline to form L-glutamate coupled to the hydrolysis of ATP to ADP and inorganic phosphate. In Staphylococcus aureus (strain MRSA252), this protein is 5-oxoprolinase subunit A.